Here is a 282-residue protein sequence, read N- to C-terminus: NAC domain-containing protein 1 (282 aa).

The NAC domain maps to 9–161; the sequence is LPPGFRFHPT…DWVLCRIYKK (153 aa). A DNA-binding region spans residues 106–167; the sequence is VGIKKALVFY…IYKKKNLGRT (62 aa). Residues 161-188 adopt a coiled-coil conformation; the sequence is KKNLGRTIEMMKVEEEELEAQNVSTTNN.

In terms of tissue distribution, expressed in roots, stem, flowers, and leaves.

It is found in the nucleus. In terms of biological role, transcription factor that binds DNA motifs 5'-CGT[AG](5N)NACG[ACT][AC][AT][ACG][ACT]-3' and 5'-CACG[ACT][AC][AT][AGT][CT]-3' in target genes promoters. Promotes leaf senescence and reduces fruit yield and sugar content, probably by establishing abscisic acid (ABA) homeostasis. In Solanum lycopersicum (Tomato), this protein is NAC domain-containing protein 1.